A 594-amino-acid chain; its full sequence is Transcriptional repressor p66-beta (594 aa).

S17 is subject to Phosphoserine. Glycyl lysine isopeptide (Lys-Gly) (interchain with G-Cter in SUMO2) cross-links involve residues K33 and K66. The disordered stretch occupies residues 62–143 (ELPTKQDGSG…ASSPRSSSRM (82 aa)). Over residues 74–89 (GYEEKLNGNLRPHGDN) the composition is skewed to basic and acidic residues. K98 is covalently cross-linked (Glycyl lysine isopeptide (Lys-Gly) (interchain with G-Cter in SUMO2)). Over residues 109-119 (SARRSEPDRGR) the composition is skewed to basic and acidic residues. T121 carries the post-translational modification Phosphothreonine. 4 positions are modified to phosphoserine: S123, S130, S135, and S136. Positions 130-140 (SDNEASSPRSS) are enriched in low complexity. The stretch at 141–195 (SRMEERLKAANLEMFKGKGMEERQQLIKQLRDELRLEEARLVLLKKLRQSQLQKE) forms a coiled coil. Residue K148 forms a Glycyl lysine isopeptide (Lys-Gly) (interchain with G-Cter in SUMO2) linkage. The segment at 166–191 (LIKQLRDELRLEEARLVLLKKLRQSQ) is CR1; interaction with MBD2 and MBD3. A Glycyl lysine isopeptide (Lys-Gly) (interchain with G-Cter in SUMO2) cross-link involves residue K200. A Phosphoserine modification is found at S209. The interval 214 to 237 (SPAHVGQQGLSKLPSRPGAQGIEP) is disordered. K282 participates in a covalent cross-link: Glycyl lysine isopeptide (Lys-Gly) (interchain with G-Cter in SUMO2). S334, S339, and S341 each carry phosphoserine. The tract at residues 341 to 481 (SAMSDAANSQ…QEQEIEQRLQ (141 aa)) is CR2; histone tail-binding. Residues K354, K455, and K468 each participate in a glycyl lysine isopeptide (Lys-Gly) (interchain with G-Cter in SUMO2) cross-link. Residues 415 to 468 (RVEPFVCAQCRTDFTPHWKQEKNGKILCEQCMTSNQKKALKAEHTNRLKNAFVK) form a GATA-type zinc finger. Positions 450 to 483 (QKKALKAEHTNRLKNAFVKALQQEQEIEQRLQQQ) form a coiled coil. Position 487 is a phosphoserine (S487). K499 is covalently cross-linked (Glycyl lysine isopeptide (Lys-Gly) (interchain with G-Cter in SUMO2)).

Homooligomer. Component of the nucleosome remodeling and deacetylase (NuRD) repressor complex, composed of core proteins MTA1, MTA2, MTA3, RBBP4, RBBP7, HDAC1, HDAC2, MBD2, MBD3, and peripherally associated proteins CDK2AP1, CDK2AP2, GATAD2A, GATAD2B, CHD3, CHD4 and CHD5. The exact stoichiometry of the NuRD complex is unknown, and some subunits such as MBD2 and MBD3, GATAD2A and GATAD2B, and CHD3, CHD4 and CHD5 define mutually exclusive NuRD complexes. Interacts with MBD2; this is required for the enhancement of MBD2-mediated repression and for targeting to the chromatin. Interacts with MBD3. Component of the MeCP1 histone deacetylase complex. Interacts with histone tails, including that of histones H2A, H2B, H3 and H4. Interacts with ERCC6.

It is found in the nucleus speckle. Its subcellular location is the nucleus. It localises to the chromosome. Functionally, transcriptional repressor. Acts as a component of the histone deacetylase NuRD complex which participates in the remodeling of chromatin. Enhances MBD2-mediated repression. Efficient repression requires the presence of GATAD2A. Targets MBD3 to discrete loci in the nucleus. May play a role in synapse development. In Mus musculus (Mouse), this protein is Transcriptional repressor p66-beta (Gatad2b).